Here is a 266-residue protein sequence, read N- to C-terminus: 3-methyl-2-oxobutanoate hydroxymethyltransferase (266 aa).

Aspartate 43 and aspartate 82 together coordinate Mg(2+). 3-methyl-2-oxobutanoate-binding positions include 43-44 (DS), aspartate 82, and lysine 110. Position 112 (glutamate 112) interacts with Mg(2+). Glutamate 179 acts as the Proton acceptor in catalysis.

It belongs to the PanB family. As to quaternary structure, homodecamer; pentamer of dimers. The cofactor is Mg(2+).

It localises to the cytoplasm. The catalysed reaction is 3-methyl-2-oxobutanoate + (6R)-5,10-methylene-5,6,7,8-tetrahydrofolate + H2O = 2-dehydropantoate + (6S)-5,6,7,8-tetrahydrofolate. Its pathway is cofactor biosynthesis; (R)-pantothenate biosynthesis; (R)-pantoate from 3-methyl-2-oxobutanoate: step 1/2. Catalyzes the reversible reaction in which hydroxymethyl group from 5,10-methylenetetrahydrofolate is transferred onto alpha-ketoisovalerate to form ketopantoate. The chain is 3-methyl-2-oxobutanoate hydroxymethyltransferase from Psychrobacter arcticus (strain DSM 17307 / VKM B-2377 / 273-4).